An 839-amino-acid polypeptide reads, in one-letter code: Septin-interacting protein 1 (839 aa).

The disordered stretch occupies residues 22–164 (INRPRGRQSR…ASERNVGAWE (143 aa)). Ser43 and Ser47 each carry phosphoserine. Thr53 carries the post-translational modification Phosphothreonine. Over residues 88-101 (LQADDEKGSQKEGA) the composition is skewed to basic and acidic residues. The span at 102–111 (EADQGEESDD) shows a compositional bias: acidic residues. Residues 140 to 149 (SRKQPSTTFQ) are compositionally biased toward polar residues. The 47-residue stretch at 167–213 (TRGIGAKLLLQMGYEPGKGLGKDLQGISHPVQAHVRKGRGAIGAYGP) folds into the G-patch domain. Residues 363–411 (IDNQERECSSQQAALESEHRKLEEIVQLERNHIRTLEESLERVERLIDN) adopt a coiled-coil conformation.

It belongs to the TFP11/STIP family. In terms of assembly, identified in the spliceosome C complex. Interacts with pnut.

Its subcellular location is the nucleus. Its function is as follows. May be involved in pre-mRNA splicing. This chain is Septin-interacting protein 1 (sip1), found in Drosophila melanogaster (Fruit fly).